A 908-amino-acid chain; its full sequence is Structural core protein VP2 (908 aa).

Positions 1–19 (MANPQNRVQTERQQNNSSP) are enriched in polar residues. The disordered stretch occupies residues 1-25 (MANPQNRVQTERQQNNSSPYLRGDE).

Belongs to the orbivirus VP3 family.

The protein resides in the virion. The polypeptide is Structural core protein VP2 (Segment-2) (Ixodes (gulls)).